We begin with the raw amino-acid sequence, 273 residues long: Orotidine 5'-phosphate decarboxylase (273 aa).

Lys-96 (proton donor) is an active-site residue.

This sequence belongs to the OMP decarboxylase family. Type 2 subfamily.

It carries out the reaction orotidine 5'-phosphate + H(+) = UMP + CO2. The protein operates within pyrimidine metabolism; UMP biosynthesis via de novo pathway; UMP from orotate: step 2/2. This is Orotidine 5'-phosphate decarboxylase from Flavobacterium johnsoniae (strain ATCC 17061 / DSM 2064 / JCM 8514 / BCRC 14874 / CCUG 350202 / NBRC 14942 / NCIMB 11054 / UW101) (Cytophaga johnsonae).